The following is a 719-amino-acid chain: Probable 1-deoxy-D-xylulose-5-phosphate synthase, chloroplastic (719 aa).

Residues methionine 1–glutamine 57 constitute a chloroplast transit peptide. Residues histidine 145 and glycine 186–serine 188 each bind thiamine diphosphate. Residue aspartate 217 participates in Mg(2+) binding. Thiamine diphosphate is bound by residues glycine 218–alanine 219, asparagine 246, tyrosine 367, and glutamate 449. Asparagine 246 is a Mg(2+) binding site.

It belongs to the transketolase family. DXPS subfamily. As to quaternary structure, homodimer. Requires Mg(2+) as cofactor. Thiamine diphosphate is required as a cofactor.

Its subcellular location is the plastid. It is found in the chloroplast. It carries out the reaction D-glyceraldehyde 3-phosphate + pyruvate + H(+) = 1-deoxy-D-xylulose 5-phosphate + CO2. The protein operates within metabolic intermediate biosynthesis; 1-deoxy-D-xylulose 5-phosphate biosynthesis; 1-deoxy-D-xylulose 5-phosphate from D-glyceraldehyde 3-phosphate and pyruvate: step 1/1. Functionally, catalyzes the acyloin condensation reaction between C atoms 2 and 3 of pyruvate and glyceraldehyde 3-phosphate to yield 1-deoxy-D-xylulose-5-phosphate (DXP). This chain is Probable 1-deoxy-D-xylulose-5-phosphate synthase, chloroplastic (TKT2), found in Capsicum annuum (Capsicum pepper).